The sequence spans 159 residues: MKVKLICVGKLKERYLKDGISEYQKRLSRFCQFEMIELTDERTPDKASFADNQLIMSKEAQRIHKKIGERDFVIALAIEGKQFPSETFSELISGVTVKGYSTITFIIGGSLGLDSIIKKRADMLMSFGLLTLPHQLMRLVLTEQIYRAFMITKGSPYHK.

S-adenosyl-L-methionine contacts are provided by residues L76, G108, and 127-132 (FGLLTL).

Belongs to the RNA methyltransferase RlmH family. In terms of assembly, homodimer.

Its subcellular location is the cytoplasm. The enzyme catalyses pseudouridine(1915) in 23S rRNA + S-adenosyl-L-methionine = N(3)-methylpseudouridine(1915) in 23S rRNA + S-adenosyl-L-homocysteine + H(+). Functionally, specifically methylates the pseudouridine at position 1915 (m3Psi1915) in 23S rRNA. The polypeptide is Ribosomal RNA large subunit methyltransferase H (Streptococcus pyogenes serotype M5 (strain Manfredo)).